The chain runs to 478 residues: Pentraxin-4 (478 aa).

The signal sequence occupies residues 1-25 (MGCSWRKTLSFFLVFVPIYLHGASS). Residues asparagine 67 and asparagine 91 are each glycosylated (N-linked (GlcNAc...) asparagine). Over residues 208–222 (RDRQELRAASEHRGP) the composition is skewed to basic and acidic residues. Residues 208–262 (RDRQELRAASEHRGPPQDSSAPLQGRREPPASGSHRVLSGTAPKDPRQQAWSPQV) are disordered. One can recognise a Pentraxin (PTX) domain in the interval 269-473 (VGPTLVFPNA…GFVQGANCTC (205 aa)). Cysteine 300 and cysteine 364 are disulfide-bonded. The Ca(2+) site is built by aspartate 322, asparagine 323, glutamate 406, glutamine 407, and aspartate 408.

Ca(2+) serves as cofactor. Widely expressed at low levels with highest levels in small intestine, testis and brain. Very low expression in endothelial cells, monocytes, neutrophils and lymphocytes. Isoform 1 is not expressed in small intestine.

Its subcellular location is the secreted. The protein is Pentraxin-4 (PTX4) of Homo sapiens (Human).